A 256-amino-acid polypeptide reads, in one-letter code: Alcohol dehydrogenase (256 aa).

Residue 12-35 (FVAGLGGIGLDTSKELVKRDLKNL) participates in NAD(+) binding. Serine 140 is a binding site for substrate. The Proton acceptor role is filled by tyrosine 153.

The protein belongs to the short-chain dehydrogenases/reductases (SDR) family. Homodimer.

It carries out the reaction a primary alcohol + NAD(+) = an aldehyde + NADH + H(+). It catalyses the reaction a secondary alcohol + NAD(+) = a ketone + NADH + H(+). This chain is Alcohol dehydrogenase (Adh), found in Drosophila erecta (Fruit fly).